Here is a 589-residue protein sequence, read N- to C-terminus: Isocitrate dehydrogenase kinase/phosphatase (589 aa).

Residues A322–L328 and K343 contribute to the ATP site. The active site involves D378.

It belongs to the AceK family.

The protein resides in the cytoplasm. The catalysed reaction is L-seryl-[isocitrate dehydrogenase] + ATP = O-phospho-L-seryl-[isocitrate dehydrogenase] + ADP + H(+). Bifunctional enzyme which can phosphorylate or dephosphorylate isocitrate dehydrogenase (IDH) on a specific serine residue. This is a regulatory mechanism which enables bacteria to bypass the Krebs cycle via the glyoxylate shunt in response to the source of carbon. When bacteria are grown on glucose, IDH is fully active and unphosphorylated, but when grown on acetate or ethanol, the activity of IDH declines drastically concomitant with its phosphorylation. The polypeptide is Isocitrate dehydrogenase kinase/phosphatase (Azoarcus sp. (strain BH72)).